A 61-amino-acid chain; its full sequence is Small ribosomal subunit protein uS14B (61 aa).

Zn(2+) is bound by residues cysteine 24, cysteine 27, cysteine 40, and cysteine 43.

It belongs to the universal ribosomal protein uS14 family. Zinc-binding uS14 subfamily. Part of the 30S ribosomal subunit. Contacts proteins S3 and S10. Requires Zn(2+) as cofactor.

Binds 16S rRNA, required for the assembly of 30S particles and may also be responsible for determining the conformation of the 16S rRNA at the A site. The protein is Small ribosomal subunit protein uS14B of Mycobacteroides abscessus (strain ATCC 19977 / DSM 44196 / CCUG 20993 / CIP 104536 / JCM 13569 / NCTC 13031 / TMC 1543 / L948) (Mycobacterium abscessus).